A 296-amino-acid chain; its full sequence is UDP-N-acetylenolpyruvoylglucosamine reductase (296 aa).

An FAD-binding PCMH-type domain is found at 19 to 203; it reads KVGGFAEYFS…LETTQKNLKK (185 aa). Residue Arg166 is part of the active site. Residue Ser217 is the Proton donor of the active site. The active site involves Glu287.

Belongs to the MurB family. FAD is required as a cofactor.

Its subcellular location is the cytoplasm. It catalyses the reaction UDP-N-acetyl-alpha-D-muramate + NADP(+) = UDP-N-acetyl-3-O-(1-carboxyvinyl)-alpha-D-glucosamine + NADPH + H(+). It functions in the pathway cell wall biogenesis; peptidoglycan biosynthesis. Its function is as follows. Cell wall formation. This is UDP-N-acetylenolpyruvoylglucosamine reductase from Prochlorococcus marinus subsp. pastoris (strain CCMP1986 / NIES-2087 / MED4).